The primary structure comprises 179 residues: Ubiquitin-conjugating enzyme E2 C (179 aa).

A2 carries the post-translational modification N-acetylalanine. Position 3 is a phosphoserine (S3). The UBC core domain maps to 30 to 175 (PVGKRLQQEL…LQETYSKQVS (146 aa)). Residue C114 is the Glycyl thioester intermediate of the active site.

This sequence belongs to the ubiquitin-conjugating enzyme family. As to quaternary structure, component of the APC/C complex, composed of at least 14 distinct subunits that assemble into a complex of at least 19 chains with a combined molecular mass of around 1.2 MDa. Within this complex, directly interacts with ANAPC2. In terms of processing, autoubiquitinated by the APC/C complex, leading to its degradation by the proteasome. Its degradation plays a central role in APC/C regulation, allowing cyclin-A accumulation before S phase entry. APC/C substrates inhibit the autoubiquitination of UBE2C/UBCH10 but not its E2 function, hence APC/C remaining active until its substrates have been destroyed.

It carries out the reaction S-ubiquitinyl-[E1 ubiquitin-activating enzyme]-L-cysteine + [E2 ubiquitin-conjugating enzyme]-L-cysteine = [E1 ubiquitin-activating enzyme]-L-cysteine + S-ubiquitinyl-[E2 ubiquitin-conjugating enzyme]-L-cysteine.. It catalyses the reaction S-ubiquitinyl-[E1 ubiquitin-activating enzyme]-L-cysteine + [acceptor protein]-L-lysine = [E1 ubiquitin-activating enzyme]-L-cysteine + N(6)-monoubiquitinyl-[acceptor protein]-L-lysine.. It participates in protein modification; protein ubiquitination. Its function is as follows. Accepts ubiquitin from the E1 complex and catalyzes its covalent attachment to other proteins. In vitro catalyzes 'Lys-11'- and 'Lys-48'-linked polyubiquitination. Acts as an essential factor of the anaphase promoting complex/cyclosome (APC/C), a cell cycle-regulated ubiquitin ligase that controls progression through mitosis. Acts by initiating 'Lys-11'-linked polyubiquitin chains on APC/C substrates, leading to the degradation of APC/C substrates by the proteasome and promoting mitotic exit. The sequence is that of Ubiquitin-conjugating enzyme E2 C (Ube2c) from Mus musculus (Mouse).